The chain runs to 562 residues: Phosphatidylinositol 4-phosphate 5-kinase type-1 alpha (562 aa).

The PIPK domain maps to T81–V449. K103 participates in a covalent cross-link: Glycyl lysine isopeptide (Lys-Gly) (interchain with G-Cter in ubiquitin). Position 486 is a phosphoserine (S486). Positions H506–S526 are disordered.

In terms of assembly, interacts with RAC1. Interacts with TUT1. Forms a complex with CDH1/E-cadherin, CTNNB1/beta-catenin and CTNND1 at the plasma membrane upon calcium stimulation. Found in a ternary complex with IRS1 and DGKZ in the absence of insulin stimulation. Interacts with DGKZ. Interacts with PIP4K2C; the interaction inhibits PIP5K1A kinase activity. In terms of tissue distribution, highly expressed in heart, placenta, skeletal muscle, kidney and pancreas. Detected at lower levels in brain, lung and liver.

It is found in the cell membrane. The protein localises to the cytoplasm. Its subcellular location is the nucleus. It localises to the nucleus speckle. The protein resides in the cell projection. It is found in the ruffle. The protein localises to the lamellipodium. The catalysed reaction is a 1,2-diacyl-sn-glycero-3-phospho-(1D-myo-inositol 4-phosphate) + ATP = a 1,2-diacyl-sn-glycero-3-phospho-(1D-myo-inositol-4,5-bisphosphate) + ADP + H(+). The enzyme catalyses 1-octadecanoyl-2-(5Z,8Z,11Z,14Z)-eicosatetraenoyl-sn-glycero-3-phospho-1D-myo-inositol 4-phosphate + ATP = 1-octadecanoyl-2-(5Z,8Z,11Z,14Z)-eicosatetraenoyl-sn-glycero-3-phospho-1D-myo-inositol 4,5-bisphosphate + ADP + H(+). It catalyses the reaction 1,2-dihexadecanoyl-sn-glycero-3-phospho-(1D-myo-inositol-4-phosphate) + ATP = 1,2-dihexadecanoyl-sn-glycero-3-phospho-(1D-myo-inositol-4,5-bisphosphate) + ADP + H(+). It carries out the reaction 1-octadecanoyl-2-(9Z)-octadecenoyl-sn-glycero-3-phospho-1D-myo-inositol 4-phosphate + ATP = 1-octadecanoyl-2-(9Z)-octadecenoyl-sn-glycero-3-phospho-1D-myo-inositol 4,5-bisphosphate + ADP + H(+). The catalysed reaction is 1-octadecanoyl-2-(9Z)-octadecenoyl-sn-glycero-3-phospho-1D-myo-inositol + ATP = 1-octadecanoyl-2-(9Z)-octadecenoyl-sn-glycero-3-phospho-1D-myo-inositol 5-phosphate + ADP + H(+). The enzyme catalyses 1-octadecanoyl-2-(9Z,12Z)-octadecadienoyl-sn-glycero-3-phospho-1D-myo-inositol + ATP = 1-octadecanoyl-2-(9Z,12Z)-octadecadienoyl-sn-glycero-3-phospho-1D-myo-inositol 5-phosphate + ADP + H(+). It catalyses the reaction 1-octadecanoyl-2-(5Z,8Z,11Z,14Z-eicosatetraenoyl)-sn-glycero-3-phospho-(1D-myo-inositol) + ATP = 1-octadecanoyl-2-(5Z,8Z,11Z,14Z)-eicosatetraenoyl-sn-glycero-3-phospho-1D-myo-inositol 5-phosphate + ADP + H(+). It carries out the reaction 1,2-di-(9Z,12Z)-octadecadienoyl-sn-glycero-3-phospho-1D-myo-inositol + ATP = 1,2-di(9Z,12Z)-octadecadienoyl-sn-glycero-3-phospho-1D-myo-inositol 5-phosphate + ADP + H(+). Its activity is regulated as follows. Activated by diarachidonoyl phosphatidic acid (DAPA), when 1,2-dipalmitoyl-PI4P is used as a substrate. Functionally, catalyzes the phosphorylation of phosphatidylinositol 4-phosphate (PtdIns(4)P/PI4P) to form phosphatidylinositol 4,5-bisphosphate (PtdIns(4,5)P2/PIP2), a lipid second messenger that regulates several cellular processes such as signal transduction, vesicle trafficking, actin cytoskeleton dynamics, cell adhesion, and cell motility. PtdIns(4,5)P2 can directly act as a second messenger or can be utilized as a precursor to generate other second messengers: inositol 1,4,5-trisphosphate (IP3), diacylglycerol (DAG) or phosphatidylinositol-3,4,5-trisphosphate (PtdIns(3,4,5)P3/PIP3). PIP5K1A-mediated phosphorylation of PtdIns(4)P is the predominant pathway for PtdIns(4,5)P2 synthesis. Can also use phosphatidylinositol (PtdIns) as substrate in vitro. Together with PIP5K1C, is required for phagocytosis, both enzymes regulating different types of actin remodeling at sequential steps. Promotes particle ingestion by activating the WAS GTPase-binding protein that induces Arp2/3 dependent actin polymerization at the nascent phagocytic cup. Together with PIP5K1B, is required, after stimulation by G-protein coupled receptors, for the synthesis of IP3 that will induce stable platelet adhesion. Recruited to the plasma membrane by the E-cadherin/beta-catenin complex where it provides the substrate PtdIns(4,5)P2 for the production of PtdIns(3,4,5)P3, IP3 and DAG, that will mobilize internal calcium and drive keratinocyte differentiation. Positively regulates insulin-induced translocation of SLC2A4 to the cell membrane in adipocytes. Together with PIP5K1C has a role during embryogenesis. Independently of its catalytic activity, is required for membrane ruffling formation, actin organization and focal adhesion formation during directional cell migration by controlling integrin-induced translocation of the small GTPase RAC1 to the plasma membrane. Also functions in the nucleus where it acts as an activator of TUT1 adenylyltransferase activity in nuclear speckles, thereby regulating mRNA polyadenylation of a select set of mRNAs. This is Phosphatidylinositol 4-phosphate 5-kinase type-1 alpha from Homo sapiens (Human).